Consider the following 229-residue polypeptide: Ribonuclease 3 (229 aa).

One can recognise an RNase III domain in the interval 5 to 127 (LNRLERKLGH…LIGAIYLDAG (123 aa)). E40 serves as a coordination point for Mg(2+). D44 is an active-site residue. The Mg(2+) site is built by D113 and E116. E116 is an active-site residue. The region spanning 154–224 (DPKTRLQEFL…AAAALVALGV (71 aa)) is the DRBM domain.

The protein belongs to the ribonuclease III family. As to quaternary structure, homodimer. The cofactor is Mg(2+).

It is found in the cytoplasm. The catalysed reaction is Endonucleolytic cleavage to 5'-phosphomonoester.. Digests double-stranded RNA. Involved in the processing of primary rRNA transcript to yield the immediate precursors to the large and small rRNAs (23S and 16S). Processes some mRNAs, and tRNAs when they are encoded in the rRNA operon. Processes pre-crRNA and tracrRNA of type II CRISPR loci if present in the organism. The protein is Ribonuclease 3 of Azotobacter vinelandii (strain DJ / ATCC BAA-1303).